The primary structure comprises 218 residues: Peptide methionine sulfoxide reductase MsrA (218 aa).

The active site involves C57.

It belongs to the MsrA Met sulfoxide reductase family.

The enzyme catalyses L-methionyl-[protein] + [thioredoxin]-disulfide + H2O = L-methionyl-(S)-S-oxide-[protein] + [thioredoxin]-dithiol. It carries out the reaction [thioredoxin]-disulfide + L-methionine + H2O = L-methionine (S)-S-oxide + [thioredoxin]-dithiol. Its function is as follows. Has an important function as a repair enzyme for proteins that have been inactivated by oxidation. Catalyzes the reversible oxidation-reduction of methionine sulfoxide in proteins to methionine. The polypeptide is Peptide methionine sulfoxide reductase MsrA (Brucella melitensis biotype 1 (strain ATCC 23456 / CCUG 17765 / NCTC 10094 / 16M)).